Consider the following 459-residue polypeptide: Phosphoglucosamine mutase (459 aa).

The Phosphoserine intermediate role is filled by S106. 4 residues coordinate Mg(2+): S106, D247, D249, and D251. S106 is modified (phosphoserine).

This sequence belongs to the phosphohexose mutase family. Mg(2+) serves as cofactor. Post-translationally, activated by phosphorylation.

It carries out the reaction alpha-D-glucosamine 1-phosphate = D-glucosamine 6-phosphate. Catalyzes the conversion of glucosamine-6-phosphate to glucosamine-1-phosphate. The polypeptide is Phosphoglucosamine mutase (Chlamydia muridarum (strain MoPn / Nigg)).